The chain runs to 735 residues: Polyribonucleotide nucleotidyltransferase (735 aa).

Mg(2+)-binding residues include aspartate 515 and aspartate 521. Residues 581–641 enclose the KH domain; sequence PKLELFSVDP…KNVDAAKDYI (61 aa). The interval 649–671 is disordered; sequence NSRGFGKKPHGHDRRDKDRQKPT. Residues 675–734 form the S1 motif domain; it reads GDEFDGVVKSVVDFGAFIELKDGVDGLLHISKIKTPLNVGDRLKVCVSEQKGNKISLSLV.

The protein belongs to the polyribonucleotide nucleotidyltransferase family. Mg(2+) serves as cofactor.

It localises to the cytoplasm. It catalyses the reaction RNA(n+1) + phosphate = RNA(n) + a ribonucleoside 5'-diphosphate. Involved in mRNA degradation. Catalyzes the phosphorolysis of single-stranded polyribonucleotides processively in the 3'- to 5'-direction. The chain is Polyribonucleotide nucleotidyltransferase from Campylobacter curvus (strain 525.92).